Here is a 103-residue protein sequence, read N- to C-terminus: Alpha-ketoglutarate dehydrogenase component 4 (103 aa).

The residue at position 1 (methionine 1) is an N-acetylmethionine. Lysine 5 carries the N6-succinyllysine modification. Residues 20–69 form a disordered region; it reads TPLIRFPDRRDNPKPNVSEALRSAGLPSHSSVISQHSKGSKSPDLLMYQG. The segment covering 47 to 56 has biased composition (polar residues); the sequence is SHSSVISQHS. Serine 49, serine 61, and serine 90 each carry phosphoserine.

It belongs to the alpha-ketoglutarate dehydrogenase component 4 family. Component of the 2-oxoglutarate dehydrogenase complex (OGDHC), composed of OGDH (2-oxoglutarate dehydrogenase; also called E1 subunit), DLST (dihydrolipoamide succinyltransferase; also called E2 subunit) and DLD (dihydrolipoamide dehydrogenase; also called E3 subunit), and the assembly factor KGD4. Within OGDHC complex, interacts (via N-terminus) with E3 subunit and (via C-terminus) with E2 subunit.

The protein localises to the mitochondrion. Functionally, molecular adapter that is necessary to form a stable 2-oxoglutarate dehydrogenase enzyme complex (OGDHC). Enables the specific recruitment of E3 subunit to E2 subunit in the 2-oxoglutarate dehydrogenase complex (OGDHC). The chain is Alpha-ketoglutarate dehydrogenase component 4 from Homo sapiens (Human).